The primary structure comprises 382 residues: Inactive anthranilate O-methyltransferase 1 (382 aa).

S-adenosyl-L-homocysteine contacts are provided by Tyr20, Cys61, Asn66, Asp102, Leu103, Ser146, and Tyr147. Residues Glu268 and Phe270 each coordinate Mg(2+).

Belongs to the methyltransferase superfamily. Type-7 methyltransferase family. SABATH subfamily.

In Zea mays (Maize), this protein is Inactive anthranilate O-methyltransferase 1 (AAMT1I).